Reading from the N-terminus, the 278-residue chain is Tryptophan synthase alpha chain (278 aa).

Active-site proton acceptor residues include Glu49 and Asp60.

Belongs to the TrpA family. In terms of assembly, tetramer of two alpha and two beta chains.

The enzyme catalyses (1S,2R)-1-C-(indol-3-yl)glycerol 3-phosphate + L-serine = D-glyceraldehyde 3-phosphate + L-tryptophan + H2O. It participates in amino-acid biosynthesis; L-tryptophan biosynthesis; L-tryptophan from chorismate: step 5/5. Functionally, the alpha subunit is responsible for the aldol cleavage of indoleglycerol phosphate to indole and glyceraldehyde 3-phosphate. The chain is Tryptophan synthase alpha chain from Psychrobacter arcticus (strain DSM 17307 / VKM B-2377 / 273-4).